Reading from the N-terminus, the 366-residue chain is Carbamoyl phosphate synthase small chain (366 aa).

The interval 1-171 (MQSKRYLVLE…KTPYVSTGKD (171 aa)) is CPSase. L-glutamine-binding residues include serine 47, glycine 221, and glycine 223. A Glutamine amidotransferase type-1 domain is found at 173–360 (SVVLVDFGKK…VAMMTNFKEK (188 aa)). The Nucleophile role is filled by cysteine 248. 5 residues coordinate L-glutamine: leucine 249, glutamine 252, asparagine 290, glycine 292, and tyrosine 293. Active-site residues include histidine 333 and glutamate 335.

This sequence belongs to the CarA family. Composed of two chains; the small (or glutamine) chain promotes the hydrolysis of glutamine to ammonia, which is used by the large (or ammonia) chain to synthesize carbamoyl phosphate. Tetramer of heterodimers (alpha,beta)4.

The catalysed reaction is hydrogencarbonate + L-glutamine + 2 ATP + H2O = carbamoyl phosphate + L-glutamate + 2 ADP + phosphate + 2 H(+). It catalyses the reaction L-glutamine + H2O = L-glutamate + NH4(+). It participates in amino-acid biosynthesis; L-arginine biosynthesis; carbamoyl phosphate from bicarbonate: step 1/1. It functions in the pathway pyrimidine metabolism; UMP biosynthesis via de novo pathway; (S)-dihydroorotate from bicarbonate: step 1/3. In terms of biological role, small subunit of the glutamine-dependent carbamoyl phosphate synthetase (CPSase). CPSase catalyzes the formation of carbamoyl phosphate from the ammonia moiety of glutamine, carbonate, and phosphate donated by ATP, constituting the first step of 2 biosynthetic pathways, one leading to arginine and/or urea and the other to pyrimidine nucleotides. The small subunit (glutamine amidotransferase) binds and cleaves glutamine to supply the large subunit with the substrate ammonia. This Staphylococcus aureus (strain COL) protein is Carbamoyl phosphate synthase small chain.